We begin with the raw amino-acid sequence, 183 residues long: uncharacterized protein (183 aa).

The Macro domain maps to 1 to 182 (MFRVVHGDIT…VALKVLERDE (182 aa)).

This is an uncharacterized protein from Pyrococcus abyssi (strain GE5 / Orsay).